Here is a 64-residue protein sequence, read N- to C-terminus: UPF0434 protein Oant_3286 (64 aa).

This sequence belongs to the UPF0434 family.

This chain is UPF0434 protein Oant_3286, found in Brucella anthropi (strain ATCC 49188 / DSM 6882 / CCUG 24695 / JCM 21032 / LMG 3331 / NBRC 15819 / NCTC 12168 / Alc 37) (Ochrobactrum anthropi).